Reading from the N-terminus, the 239-residue chain is Leucyl/phenylalanyl-tRNA--protein transferase (239 aa).

This sequence belongs to the L/F-transferase family.

It is found in the cytoplasm. It catalyses the reaction N-terminal L-lysyl-[protein] + L-leucyl-tRNA(Leu) = N-terminal L-leucyl-L-lysyl-[protein] + tRNA(Leu) + H(+). The catalysed reaction is N-terminal L-arginyl-[protein] + L-leucyl-tRNA(Leu) = N-terminal L-leucyl-L-arginyl-[protein] + tRNA(Leu) + H(+). The enzyme catalyses L-phenylalanyl-tRNA(Phe) + an N-terminal L-alpha-aminoacyl-[protein] = an N-terminal L-phenylalanyl-L-alpha-aminoacyl-[protein] + tRNA(Phe). Its function is as follows. Functions in the N-end rule pathway of protein degradation where it conjugates Leu, Phe and, less efficiently, Met from aminoacyl-tRNAs to the N-termini of proteins containing an N-terminal arginine or lysine. The sequence is that of Leucyl/phenylalanyl-tRNA--protein transferase from Aliivibrio fischeri (strain MJ11) (Vibrio fischeri).